Consider the following 146-residue polypeptide: Snaclec agkisacutacin subunit B (146 aa).

A signal peptide spans 1-23 (MGRFIFVSFGLLVVFLSLSGTAA). The C-type lectin domain occupies 24-146 (DCPSDWSSYE…TCSFVCKFQA (123 aa)). 3 disulfide bridges follow: cysteine 25-cysteine 36, cysteine 53-cysteine 142, and cysteine 119-cysteine 134. Ca(2+)-binding residues include serine 64 and glutamate 70.

It belongs to the snaclec family. Heterodimer of subunits A and B; disulfide-linked. As to expression, expressed by the venom gland.

It localises to the secreted. Anticoagulant protein which binds to the gamma-carboxyglutamic acid-domain regions of factor IX (F9) and factor X (F10) in the presence of calcium with a 1 to 1 stoichiometry. Also inhibits platelet aggregation by binding to platelet glycoprotein Ibalpha (GP1BA) and functioning as a blocker of von Willebrand factor (VWF). Is devoid of hemorrhagic and lethal activities. Possesses antithrombotic and thrombolytic activities. Also hydrolyzes the Aalpha-chain of fibrinogen (FGA). Does not affect the Bbeta-chain (FGB) and the gamma chain (FGG). This is Snaclec agkisacutacin subunit B from Deinagkistrodon acutus (Hundred-pace snake).